The following is a 397-amino-acid chain: Cephalotocin receptor 1 (397 aa).

At M1–E48 the chain is on the extracellular side. N18, N27, and N33 each carry an N-linked (GlcNAc...) asparagine glycan. The helical transmembrane segment at V49–T69 threads the bilayer. At L70 to D91 the chain is on the cytoplasmic side. The helical transmembrane segment at L92–L112 threads the bilayer. Residues G113–L120 are Extracellular-facing. The cysteines at positions 118 and 194 are disulfide-linked. Residues V121–I141 form a helical membrane-spanning segment. Residues D142–H162 lie on the Cytoplasmic side of the membrane. Residues V163–W183 traverse the membrane as a helical segment. The Extracellular segment spans residues S184 to K205. The helical transmembrane segment at F206–F226 threads the bilayer. The Cytoplasmic portion of the chain corresponds to Y227–S293. Residues V294–C314 traverse the membrane as a helical segment. At Q315 to Y331 the chain is on the extracellular side. The helical transmembrane segment at T332–F352 threads the bilayer. Over S353–N397 the chain is Cytoplasmic.

It belongs to the G-protein coupled receptor 1 family. Vasopressin/oxytocin receptor subfamily. Present in brain, buccal ganglion, gastric ganglion, olfactory lube, peduncle lobe, optical lobe, pancreas, the oviduct and the ovary.

It is found in the cell membrane. Functionally, acts as a receptor for cephalotocin. The sequence is that of Cephalotocin receptor 1 from Octopus vulgaris (Common octopus).